A 639-amino-acid polypeptide reads, in one-letter code: UvrABC system protein C (639 aa).

In terms of domain architecture, GIY-YIG spans 31–109 (EQAGVYRMYD…IKKYQPKYNI (79 aa)). Positions 218–253 (SAVIEQLVARMELASNELHFELAAKYRDQIVTLRKV) constitute a UVR domain.

This sequence belongs to the UvrC family. As to quaternary structure, interacts with UvrB in an incision complex.

The protein resides in the cytoplasm. Its function is as follows. The UvrABC repair system catalyzes the recognition and processing of DNA lesions. UvrC both incises the 5' and 3' sides of the lesion. The N-terminal half is responsible for the 3' incision and the C-terminal half is responsible for the 5' incision. In Colwellia psychrerythraea (strain 34H / ATCC BAA-681) (Vibrio psychroerythus), this protein is UvrABC system protein C.